Here is a 129-residue protein sequence, read N- to C-terminus: Small ribosomal subunit protein uS11 (129 aa).

The interval 107–129 (IEDVTPVPHDSIRGKGGRRGRRV) is disordered.

This sequence belongs to the universal ribosomal protein uS11 family. Part of the 30S ribosomal subunit.

Located on the platform of the 30S subunit. This chain is Small ribosomal subunit protein uS11, found in Methanoculleus marisnigri (strain ATCC 35101 / DSM 1498 / JR1).